The chain runs to 613 residues: Probable inactive purple acid phosphatase 1 (613 aa).

A signal peptide spans 1–24; that stretch reads MRESLVAILVTVISVLGAIHQVKS. N-linked (GlcNAc...) asparagine glycans are attached at residues asparagine 89 and asparagine 116. Residue aspartate 295 participates in Fe cation binding. Residue asparagine 316 is glycosylated (N-linked (GlcNAc...) asparagine). Fe cation contacts are provided by aspartate 336 and tyrosine 339. Aspartate 336 is a Zn(2+) binding site. Asparagine 369, histidine 458, and histidine 500 together coordinate Zn(2+). Residue asparagine 369 coordinates substrate. 500 to 502 provides a ligand contact to substrate; sequence HAH. Histidine 502 contacts Fe cation. N-linked (GlcNAc...) asparagine glycans are attached at residues asparagine 528 and asparagine 551.

This sequence belongs to the metallophosphoesterase superfamily. Purple acid phosphatase family. Homodimer. Fe cation is required as a cofactor. Zn(2+) serves as cofactor. As to expression, expressed in roots, stems, leaves, flowers and siliques.

It is found in the secreted. The chain is Probable inactive purple acid phosphatase 1 (PAP1) from Arabidopsis thaliana (Mouse-ear cress).